Reading from the N-terminus, the 1142-residue chain is Collagen alpha-1(XIX) chain (1142 aa).

The signal sequence occupies residues 1-23 (MRLTGPWKLWLWMSIFLLPASTS). A Laminin G-like domain is found at 50–234 (NKLEVSGFDL…LHQLKIYCSA (185 aa)). 3 disordered regions span residues 288-680 (IPNK…GDPI), 704-1009 (PGLK…PGIP), and 1053-1142 (YGRP…TGGN). Collagen-like domains lie at 292–349 (GEAG…GEKG), 350–391 (DPAL…ALPG), and 392–433 (SLGI…GIQG). The tract at residues 292–351 (GEAGLPGAPGSPGQKGHKGEPGENGLHGAPGFPGQKGEQGFEGSKGETGEKGEQGEKGDP) is triple-helical region 1 (COL1). Residues 335 to 350 (SKGETGEKGEQGEKGD) show a composition bias toward basic and acidic residues. The segment at 370–429 (GPPGPKGEKGDTGPPGPPALPGSLGIQGPQGPPGKEGQRGRRGKTGPPGKPGPPGPPGPP) is triple-helical region 2 (COL2). Residues 390–404 (PGSLGIQGPQGPPGK) are compositionally biased toward low complexity. Residues 417–429 (PGKPGPPGPPGPP) show a composition bias toward pro residues. Composition is skewed to basic and acidic residues over residues 444–463 (KDNKGNDEHEAGGLKGDKGE) and 478–496 (QKGEPGEPFTKGEKGDRGE). A triple-helical region 3 (COL3) region spans residues 448–688 (GNDEHEAGGL…PIALPLLGDI (241 aa)). 8 Collagen-like domains span residues 474–516 (GPKG…GPPG), 568–624 (GPPG…GPQG), 626–678 (GIPG…PPGD), 728–778 (KGDI…APGP), 779–814 (TGPPGLMGRTGHPGPTGAKGEKGSDGPPGKPGPPGP), 845–903 (GPPG…VPGE), 904–947 (PGER…GDRG), and 948–1004 (PKGE…GSPG). A compositionally biased stretch (low complexity) spans 640-651 (PGIQGPRGLPGL). Residues 700–818 (QASVPGLKSN…PGPPGPPGIP (119 aa)) form a triple-helical region 4 (COL4) region. 2 stretches are compositionally biased toward basic and acidic residues: residues 720-731 (GKYDSMARKGDI) and 743-752 (EGPKGSKGER). 2 stretches are compositionally biased toward pro residues: residues 806 to 817 (PGKPGPPGPPGI) and 840 to 852 (YPGPPGPPGPKGD). Positions 833-1012 (GGVNVPSYPG…PGIPGIPADA (180 aa)) are triple-helical region 5 (COL5). The span at 943-954 (PGDRGPKGERGD) shows a compositional bias: basic and acidic residues. The short motif at 952–954 (RGD) is the Cell attachment site element. Positions 1054-1111 (GRPGPPGKDGLPGPPGDPGPQGYRGQKGERGEPGIGLPGSPGLPGTSALGLPGSPGAP) are triple-helical region 6 (COL6). A compositionally biased stretch (low complexity) spans 1093-1107 (SPGLPGTSALGLPGS). The segment covering 1108-1119 (PGAPGPQGPPGP) has biased composition (pro residues).

This sequence belongs to the fibril-associated collagens with interrupted helices (FACIT) family. Oligomer; disulfide-linked. Prolines at the third position of the tripeptide repeating unit (G-X-Y) are hydroxylated in some or all of the chains. In terms of tissue distribution, localized to vascular, neuronal, mesenchymal, and some epithelial basement membrane zones in umbilical cord.

It is found in the secreted. The protein resides in the extracellular space. It localises to the extracellular matrix. May act as a cross-bridge between fibrils and other extracellular matrix molecules. Involved in skeletal myogenesis in the developing esophagus. May play a role in organization of the pericellular matrix or the sphinteric smooth muscle. The sequence is that of Collagen alpha-1(XIX) chain (COL19A1) from Homo sapiens (Human).